The sequence spans 341 residues: Uroporphyrinogen decarboxylase (341 aa).

Substrate is bound by residues Arg26–Arg30, Asp75, Tyr150, Ser205, and His318.

The protein belongs to the uroporphyrinogen decarboxylase family. As to quaternary structure, homodimer.

The protein localises to the cytoplasm. It catalyses the reaction uroporphyrinogen III + 4 H(+) = coproporphyrinogen III + 4 CO2. It functions in the pathway porphyrin-containing compound metabolism; protoporphyrin-IX biosynthesis; coproporphyrinogen-III from 5-aminolevulinate: step 4/4. Catalyzes the decarboxylation of four acetate groups of uroporphyrinogen-III to yield coproporphyrinogen-III. The chain is Uroporphyrinogen decarboxylase from Thermus thermophilus (strain ATCC BAA-163 / DSM 7039 / HB27).